The sequence spans 439 residues: Methylenetetrahydrofolate--tRNA-(uracil-5-)-methyltransferase TrmFO (439 aa).

9 to 14 (GAGLAG) is a binding site for FAD.

Belongs to the MnmG family. TrmFO subfamily. FAD serves as cofactor.

The protein resides in the cytoplasm. It catalyses the reaction uridine(54) in tRNA + (6R)-5,10-methylene-5,6,7,8-tetrahydrofolate + NADH + H(+) = 5-methyluridine(54) in tRNA + (6S)-5,6,7,8-tetrahydrofolate + NAD(+). The enzyme catalyses uridine(54) in tRNA + (6R)-5,10-methylene-5,6,7,8-tetrahydrofolate + NADPH + H(+) = 5-methyluridine(54) in tRNA + (6S)-5,6,7,8-tetrahydrofolate + NADP(+). Catalyzes the folate-dependent formation of 5-methyl-uridine at position 54 (M-5-U54) in all tRNAs. This chain is Methylenetetrahydrofolate--tRNA-(uracil-5-)-methyltransferase TrmFO, found in Desulforudis audaxviator (strain MP104C).